Consider the following 298-residue polypeptide: Junctional adhesion molecule A (298 aa).

Residues 1-28 (MGTEARAGRRQLLVFTSVVLSSLALGRG) form the signal peptide. Ig-like V-type domains lie at 29-126 (AVYT…VQLT) and 134-227 (PTVH…EAVR). Residues 29–237 (AVYTSEPDVR…MEAAELNVGG (209 aa)) lie on the Extracellular side of the membrane. 2 disulfide bridges follow: C49/C108 and C152/C211. N184 is a glycosylation site (N-linked (GlcNAc...) asparagine). The helical transmembrane segment at 238–258 (IVAAVLVTLILLGFLILGIWF) threads the bilayer. Residues 259–298 (AYRRGYFDRTKKGTSSKKVIYSQPAARSEGEFRQTSSFLV) lie on the Cytoplasmic side of the membrane. A phosphoserine mark is found at S280 and S286.

This sequence belongs to the immunoglobulin superfamily. Interacts with the ninth PDZ domain of MPDZ. Interacts with the first PDZ domain of PARD3. The association between PARD3 and PARD6B probably disrupts this interaction. Interacts with ITGAL (via I-domain). Interacts with CD151. As to quaternary structure, (Microbial infection) Interacts with calicivirus capsid protein. In terms of assembly, (Microbial infection) Interacts with the orthoreovirus sigma-1 capsid protein.

Its subcellular location is the cell junction. It is found in the tight junction. The protein resides in the cell membrane. Its function is as follows. Seems to play a role in epithelial tight junction formation. Appears early in primordial forms of cell junctions and recruits PARD3. The association of the PARD6-PARD3 complex may prevent the interaction of PARD3 with JAM1, thereby preventing tight junction assembly. Plays a role in regulating monocyte transmigration involved in integrity of epithelial barrier. Ligand for integrin alpha-L/beta-2 involved in memory T-cell and neutrophil transmigration. Involved in platelet activation. Functionally, (Microbial infection) Acts as a functional receptor for murine norovirus. (Microbial infection) In case of orthoreovirus infection, serves as receptor for the virus. The sequence is that of Junctional adhesion molecule A (F11R) from Felis catus (Cat).